Consider the following 357-residue polypeptide: Ribosomal RNA large subunit methyltransferase M (357 aa).

S-adenosyl-L-methionine-binding positions include Ser183, 216–219, Asp235, Asp255, and Asp271; that span reads APGG. The Proton acceptor role is filled by Lys300.

Belongs to the class I-like SAM-binding methyltransferase superfamily. RNA methyltransferase RlmE family. RlmM subfamily. As to quaternary structure, monomer.

It localises to the cytoplasm. The enzyme catalyses cytidine(2498) in 23S rRNA + S-adenosyl-L-methionine = 2'-O-methylcytidine(2498) in 23S rRNA + S-adenosyl-L-homocysteine + H(+). Its function is as follows. Catalyzes the 2'-O-methylation at nucleotide C2498 in 23S rRNA. This chain is Ribosomal RNA large subunit methyltransferase M, found in Pseudomonas fluorescens (strain ATCC BAA-477 / NRRL B-23932 / Pf-5).